Consider the following 423-residue polypeptide: Alpha-1-antichymotrypsin (423 aa).

The signal sequence occupies residues 1-23 (MERMLPLLALGLLAAGFCPAVLC). N-linked (GlcNAc...) asparagine glycans are attached at residues asparagine 33, asparagine 93, asparagine 106, asparagine 127, and asparagine 186. Residues 235–237 (KKK) mediate DNA binding. The N-linked (GlcNAc...) asparagine glycan is linked to asparagine 271. The interval 369–394 (GTEASAATAVKITLLSALVETRTIVR) is RCL. Residues 381 to 389 (TLLSALVET) form an O-glycosylated at one site region.

Belongs to the serpin family. In terms of assembly, interacts with DNAJC1. In terms of processing, N- and O-glycosylated. In terms of tissue distribution, plasma. Synthesized in the liver. Like the related alpha-1-antitrypsin, its concentration increases in the acute phase of inflammation or infection. Found in the amyloid plaques from the hippocampus of Alzheimer disease brains.

Its subcellular location is the secreted. Although its physiological function is unclear, it can inhibit neutrophil cathepsin G and mast cell chymase, both of which can convert angiotensin-1 to the active angiotensin-2. The polypeptide is Alpha-1-antichymotrypsin (SERPINA3) (Homo sapiens (Human)).